Consider the following 54-residue polypeptide: Large ribosomal subunit protein bL32c (54 aa).

This sequence belongs to the bacterial ribosomal protein bL32 family.

Its subcellular location is the plastid. The protein resides in the chloroplast. In Piper cenocladum (Ant piper), this protein is Large ribosomal subunit protein bL32c.